Here is a 362-residue protein sequence, read N- to C-terminus: MSKNIVVLPGDHVGQEIAQEAIKVLEAISEVSPKAKFNFQHHLIGGSAIDATGSPLPDEALAAAKKADAVLLGAVGGPKWGTGAVRPEQGLLKIRKELQLYANLRPCNFASESLLELSPLKPQHARGTDFIVVRELVGGIYFGQRKEDDGDGVAWDSERYTKPEVQRITRMAAFLALQHNPPLPIWSLDKANVLASSRLWRKTVEETIKNEFPQLTVKHQLIDSAAMILIKNPTQLNGIIITSNMFEDIISDEASVIPGSLGLLPSASLASLPDTNEAFGLYEPCHGSAPDLPKGKVNPVAMILSAAMMLKLSLNMAKEGEALETAVKQVLDSGVRTGDLGGSNSTSEVGDAIAKAVKQILA.

An NAD(+)-binding site is contributed by 77–88 (GPKWGTGAVRPE). 4 residues coordinate substrate: R95, R105, R134, and D223. Mg(2+) contacts are provided by D223, D248, and D252. 287–298 (GSAPDLPKGKVN) is a binding site for NAD(+).

This sequence belongs to the isocitrate and isopropylmalate dehydrogenases family. Homodimer. The cofactor is Mg(2+). Mn(2+) is required as a cofactor.

The protein resides in the cytoplasm. It carries out the reaction (2R,3S)-3-isopropylmalate + NAD(+) = 4-methyl-2-oxopentanoate + CO2 + NADH. It functions in the pathway amino-acid biosynthesis; L-leucine biosynthesis; L-leucine from 3-methyl-2-oxobutanoate: step 3/4. Its function is as follows. Catalyzes the oxidation of 3-carboxy-2-hydroxy-4-methylpentanoate (3-isopropylmalate) to 3-carboxy-4-methyl-2-oxopentanoate. The product decarboxylates to 4-methyl-2 oxopentanoate. The protein is 3-isopropylmalate dehydrogenase (LEU2) of Zygosaccharomyces bailii.